Reading from the N-terminus, the 278-residue chain is Putative cysteine-rich repeat secretory protein 19 (278 aa).

The signal sequence occupies residues 1 to 32; sequence MYSSSSVSKRFVLVPIVVVVTTQLLLVRNVSS. 2 consecutive Gnk2-homologous domains span residues 39 to 147 and 160 to 267; these read YLHH…SLDT and PSAK…LYPF.

Belongs to the cysteine-rich repeat secretory protein family.

The protein localises to the secreted. The protein is Putative cysteine-rich repeat secretory protein 19 (CRRSP19) of Arabidopsis thaliana (Mouse-ear cress).